The following is a 356-amino-acid chain: Chorismate synthase (356 aa).

NADP(+) is bound by residues arginine 48 and arginine 54. Residues arginine 125–serine 127, asparagine 237–alanine 238, glycine 281, lysine 296–serine 300, and arginine 322 each bind FMN.

It belongs to the chorismate synthase family. In terms of assembly, homotetramer. The cofactor is FMNH2.

It catalyses the reaction 5-O-(1-carboxyvinyl)-3-phosphoshikimate = chorismate + phosphate. It participates in metabolic intermediate biosynthesis; chorismate biosynthesis; chorismate from D-erythrose 4-phosphate and phosphoenolpyruvate: step 7/7. Catalyzes the anti-1,4-elimination of the C-3 phosphate and the C-6 proR hydrogen from 5-enolpyruvylshikimate-3-phosphate (EPSP) to yield chorismate, which is the branch point compound that serves as the starting substrate for the three terminal pathways of aromatic amino acid biosynthesis. This reaction introduces a second double bond into the aromatic ring system. The polypeptide is Chorismate synthase (Novosphingobium aromaticivorans (strain ATCC 700278 / DSM 12444 / CCUG 56034 / CIP 105152 / NBRC 16084 / F199)).